Here is an 89-residue protein sequence, read N- to C-terminus: MIGSLKLSFVLALSLSVMHVLWCYPVLSSKVPGKPDYFLILLSSCPARLEGSDRLAFLKPILEKTSMKRSFRNGVGSGAKKTSFRRAKQ.

Residues 1-23 form the signal peptide; it reads MIGSLKLSFVLALSLSVMHVLWC. The propeptide occupies 24-69; it reads YPVLSSKVPGKPDYFLILLSSCPARLEGSDRLAFLKPILEKTSMKR.

It is found in the secreted. Its function is as follows. May play an important anorexigenic role. Modulates arousal and anxiety as well as increases locomotor activity. Binds to its receptor NPSR1 with nanomolar affinity to increase intracellular calcium concentrations. The polypeptide is Neuropeptide S (Nps) (Mus musculus (Mouse)).